We begin with the raw amino-acid sequence, 339 residues long: D-erythrose-4-phosphate dehydrogenase (339 aa).

11–12 (RI) serves as a coordination point for NAD(+). Residues 153-155 (SCT), Arg-199, 212-213 (TK), and Arg-235 each bind substrate. Catalysis depends on Cys-154, which acts as the Nucleophile. Asn-317 contributes to the NAD(+) binding site.

The protein belongs to the glyceraldehyde-3-phosphate dehydrogenase family. Epd subfamily. Homotetramer.

The protein resides in the cytoplasm. It catalyses the reaction D-erythrose 4-phosphate + NAD(+) + H2O = 4-phospho-D-erythronate + NADH + 2 H(+). It participates in cofactor biosynthesis; pyridoxine 5'-phosphate biosynthesis; pyridoxine 5'-phosphate from D-erythrose 4-phosphate: step 1/5. In terms of biological role, catalyzes the NAD-dependent conversion of D-erythrose 4-phosphate to 4-phosphoerythronate. The chain is D-erythrose-4-phosphate dehydrogenase from Shewanella pealeana (strain ATCC 700345 / ANG-SQ1).